Here is a 1206-residue protein sequence, read N- to C-terminus: MRVTAANQHQYDTDLLETLAQRVMVGDGAMGTQLQDAELTLDDFRGLEGCNEILNETRPDVLETIHRRYFEAGADLVETNTFGCNLSNLGDYDIADKIRDLSQRGTVIARRVADELTTPDHKRYVLGSMGPGTKLPTLGHTEYRVVRDAYTESALGMLDGGADAVLVETCQDLLQLKAAVLGSRRAMTQAGRHIPVFVHVTVETTGTMLLGSEIGAALAAVEPLGVDMIGLNCATGPAEMSEHLRHLSKHARIPVSVMPNAGLPVLGAKGAEYPLQPDELAEALAGFIAEFGLSLVGGCCGTTPDHIREVAAAVARCNDGTVPRGERHVTYEPSVSSLYTAIPFAQKPSVLMIGERTNANGSKVFREAMIAEDYQKCLDIAKDQTRGGAHLLDLCVDYVGRNGVADMKALAGRLATVSTLPIMLDSTEIPVLQAGLEHLGGRCVINSVNYEDGDGPESRFVKTMELVAEHGAAVVALTIDEQGQARTVEKKVEVAERLINDITSNWGVDKSAILIDCLTFTIATGQEESRKDGIETIDAIRELKKRHPAVQTTLGLSNISFGLNPSARQVLNSVFLHECQEAGLDSAIVHASKILPINRIPEEQRQAALDLVYDRRREGYDPLQKLMWLFKGVSSPSSKETREAELAKLPLFDRLAQRIVDGERNGLDVDLDEAMTQKPPLAIINENLLDGMKTVGELFGSGQMQLPFVLQSAEVMKAAVAYLEPHMEKSDCDFGKGLAKGRIVLATVKGDVHDIGKNLVDIILSNNGYEVVNLGIKQPITNILEVAEDKSADVVGMSGLLVKSTVIMKENLEEMNTRGVAEKFPVLLGGAALTRSYVENDLAEVYEGEVHYARDAFEGLKLMDTIMSAKRGEALAPGSPESLAAEADRNKETERKARHERSKRIAVQRKAAEEPVEVPERSDVPSDVEVPAPPFWGSRIIKGLAVADYTGFLDERALFLGQWGLRGVRGGAGPSYEDLVQTEGRPRLRYWLDRLSTYGVLAYAAVVYGYFPAVSEDNDIVVLAEPRPDAEQRYRFTFPRQQRGRFLCIADFIRSRDLATERSEVDVLPFQLVTMGQPIADFVGELFVSNSYRDYLEVHGIGVQLTEALAEYWHRRIREELKFSGNRTMSADDPEAVEDYFKLGYRGARFAFGYGACPDLEDRIKMMELLQPERIGVTISEELQLHPEQSTDAFVLHHPAAKYFNV.

The region spanning 1-314 (MRVTAANQHQ…DHIREVAAAV (314 aa)) is the Hcy-binding domain. The Zn(2+) site is built by cysteine 233, cysteine 299, and cysteine 300. One can recognise a Pterin-binding domain in the interval 350-609 (VLMIGERTNA…IPEEQRQAAL (260 aa)). The region spanning 642 to 735 (REAELAKLPL…HMEKSDCDFG (94 aa)) is the B12-binding N-terminal domain. In terms of domain architecture, B12-binding spans 740–877 (KGRIVLATVK…SAKRGEALAP (138 aa)). Methylcob(III)alamin-binding positions include 750–754 (GDVHD), histidine 753, serine 798, and alanine 856. The disordered stretch occupies residues 873–925 (EALAPGSPESLAAEADRNKETERKARHERSKRIAVQRKAAEEPVEVPERSDVP). The span at 886–897 (EADRNKETERKA) shows a compositional bias: basic and acidic residues. Over residues 898-907 (RHERSKRIAV) the composition is skewed to basic residues. Residues 907 to 1206 (VQRKAAEEPV…HHPAAKYFNV (300 aa)) enclose the AdoMet activation domain. Over residues 910–924 (KAAEEPVEVPERSDV) the composition is skewed to basic and acidic residues. Residues aspartate 954, arginine 1149, and 1203–1204 (YF) each bind S-adenosyl-L-methionine.

The protein belongs to the vitamin-B12 dependent methionine synthase family. Methylcob(III)alamin serves as cofactor. Requires Zn(2+) as cofactor.

It catalyses the reaction (6S)-5-methyl-5,6,7,8-tetrahydrofolate + L-homocysteine = (6S)-5,6,7,8-tetrahydrofolate + L-methionine. It participates in amino-acid biosynthesis; L-methionine biosynthesis via de novo pathway; L-methionine from L-homocysteine (MetH route): step 1/1. In terms of biological role, catalyzes the transfer of a methyl group from methyl-cobalamin to homocysteine, yielding enzyme-bound cob(I)alamin and methionine. Subsequently, remethylates the cofactor using methyltetrahydrofolate. The chain is Methionine synthase (metH) from Mycobacterium leprae (strain TN).